The sequence spans 106 residues: BLOC-1-related complex subunit 7 (106 aa).

This sequence belongs to the BORCS7 family. In terms of assembly, component of the BLOC-one-related complex (BORC) which is composed of BLOC1S1, BLOC1S2, BORCS5, BORCS6, BORCS7, BORCS8, KXD1 and SNAPIN.

It localises to the lysosome membrane. Functionally, as part of the BORC complex may play a role in lysosomes movement and localization at the cell periphery. Associated with the cytosolic face of lysosomes, the BORC complex may recruit ARL8B and couple lysosomes to microtubule plus-end-directed kinesin motor. The chain is BLOC-1-related complex subunit 7 from Pongo abelii (Sumatran orangutan).